Consider the following 27-residue polypeptide: Cruzioseptin-14 (27 aa).

Expressed by the skin glands.

The protein resides in the secreted. Has antimicrobial activity. The sequence is that of Cruzioseptin-14 from Cruziohyla calcarifer (Splendid leaf frog).